The following is a 179-amino-acid chain: Large ribosomal subunit protein uL5 (179 aa).

Belongs to the universal ribosomal protein uL5 family. In terms of assembly, part of the 50S ribosomal subunit; part of the 5S rRNA/L5/L18/L25 subcomplex. Contacts the 5S rRNA and the P site tRNA. Forms a bridge to the 30S subunit in the 70S ribosome.

Its function is as follows. This is one of the proteins that bind and probably mediate the attachment of the 5S RNA into the large ribosomal subunit, where it forms part of the central protuberance. In the 70S ribosome it contacts protein S13 of the 30S subunit (bridge B1b), connecting the 2 subunits; this bridge is implicated in subunit movement. Contacts the P site tRNA; the 5S rRNA and some of its associated proteins might help stabilize positioning of ribosome-bound tRNAs. This is Large ribosomal subunit protein uL5 from Vibrio vulnificus (strain CMCP6).